A 443-amino-acid chain; its full sequence is Putative rhamnogalacturonase D (443 aa).

An N-terminal signal peptide occupies residues 1–16 (MLVTSLIALLPAIAAA). The cysteines at positions 37 and 63 are disulfide-linked. N-linked (GlcNAc...) asparagine glycans are attached at residues N47, N103, N124, and N152. Residue D215 is the Proton donor of the active site. C217 and C234 are oxidised to a cystine. Residues N235, N250, N263, N276, and N281 are each glycosylated (N-linked (GlcNAc...) asparagine). An intrachain disulfide couples C338 to C344. An N-linked (GlcNAc...) asparagine glycan is attached at N346. A disulfide bond links C366 and C375. N-linked (GlcNAc...) asparagine glycosylation occurs at N380.

It belongs to the glycosyl hydrolase 28 family.

The protein resides in the secreted. Its function is as follows. Pectinolytic enzymes consist of four classes of enzymes: pectine lyase, polygalacturonase, pectin methylesterase and rhamnogalacturonase. Hydrolyzes alpha-D-galacturonopyranosyl-(1,2)-alpha-L-rhamnopyranosyl linkages in the backbone of the hairy regions of pectins. This Aspergillus niger (strain ATCC MYA-4892 / CBS 513.88 / FGSC A1513) protein is Putative rhamnogalacturonase D (rhgD).